The sequence spans 147 residues: Arginine repressor (147 aa).

Belongs to the ArgR family.

The protein resides in the cytoplasm. It participates in amino-acid biosynthesis; L-arginine biosynthesis [regulation]. In terms of biological role, regulates arginine biosynthesis genes. In Chlamydia felis (strain Fe/C-56) (Chlamydophila felis), this protein is Arginine repressor.